The primary structure comprises 182 residues: NAD(P)H-quinone oxidoreductase subunit I, chloroplastic (182 aa).

4Fe-4S ferredoxin-type domains lie at 55-84 (GRIH…VDWK) and 95-124 (LNYS…MTEE). [4Fe-4S] cluster contacts are provided by C64, C67, C70, C74, C104, C107, C110, and C114.

It belongs to the complex I 23 kDa subunit family. NDH is composed of at least 16 different subunits, 5 of which are encoded in the nucleus. Requires [4Fe-4S] cluster as cofactor.

The protein resides in the plastid. It localises to the chloroplast thylakoid membrane. It catalyses the reaction a plastoquinone + NADH + (n+1) H(+)(in) = a plastoquinol + NAD(+) + n H(+)(out). It carries out the reaction a plastoquinone + NADPH + (n+1) H(+)(in) = a plastoquinol + NADP(+) + n H(+)(out). NDH shuttles electrons from NAD(P)H:plastoquinone, via FMN and iron-sulfur (Fe-S) centers, to quinones in the photosynthetic chain and possibly in a chloroplast respiratory chain. The immediate electron acceptor for the enzyme in this species is believed to be plastoquinone. Couples the redox reaction to proton translocation, and thus conserves the redox energy in a proton gradient. In Buxus microphylla (Littleleaf boxwood), this protein is NAD(P)H-quinone oxidoreductase subunit I, chloroplastic.